We begin with the raw amino-acid sequence, 483 residues long: Protein hedgehog (483 aa).

An N-terminal signal peptide occupies residues 1–19 (MDNQTVAAIWSCASATCLS). A propeptide spanning residues 20-92 (LDAKRHSVET…LALNFRHAHS (73 aa)) is cleaved from the precursor. Positions 28–57 (ETNTNDRQAPPGLSNSNNNNNNNKSTAVDA) are disordered. The segment covering 41 to 50 (SNSNNNNNNN) has biased composition (low complexity). Cys-93 is lipidated: N-palmitoyl cysteine. Ca(2+) is bound by residues Glu-157, Glu-158, Asp-163, Thr-193, Glu-194, Asp-197, and Asp-199. Gly-266 is lipidated: Cholesterol glycine ester.

It belongs to the hedgehog family. Interacts with shf. The C-terminal part of the hedgehog protein precursor displays an autoproteolysis activity that results in the cleavage of the full-length protein into two parts (N-product and C-product). In addition, the C-terminal part displays a cholesterol transferase activity that results by the covalent attachment of a cholesterol moiety to the C-terminal of the newly generated N-product. The N-product is the active species in both local and long-range signaling, whereas the C-product has no signaling activity. Post-translationally, cholesterylation is required for N-product targeting to lipid rafts and multimerization. In terms of processing, N-palmitoylation by Rasp of the hedgehog N-product, within the secretory pathway, is required for the embryonic and larval patterning activities of the hedgehog signal.

The protein localises to the nucleus. Its subcellular location is the cytoplasm. It is found in the cell membrane. The catalysed reaction is glycyl-L-cysteinyl-[protein] + cholesterol + H(+) = [protein]-C-terminal glycyl cholesterol ester + N-terminal L-cysteinyl-[protein]. Functionally, the C-terminal part of the hedgehog protein precursor displays an autoproteolysis activity that results in the cleavage of the full-length protein into two parts (N-product and C-product). In addition, the C-terminal part displays a cholesterol transferase activity that results by the covalent attachment of a cholesterol moiety to the C-terminal of the newly generated N-product. Once cleaved, the C-product has no signaling activity and diffuses from the cell. Its function is as follows. The dually lipidated hedgehog protein N-product is a morphogen which is essential for a variety of patterning events during development. Establishes the anterior-posterior axis of the embryonic segments and patterns the larval imaginal disks. Binds to the patched (ptc) receptor, which functions in association with smoothened (smo), to activate the transcription of target genes wingless (wg), decapentaplegic (dpp) and ptc. In the absence of hh, ptc represses the constitutive signaling activity of smo through fused (fu). Essential component of a signaling pathway which regulates the Duox-dependent gut immune response to bacterial uracil; required to activate Cad99C-dependent endosome formation, norpA-dependent Ca2+ mobilization and p38 MAPK, which are essential steps in the Duox-dependent production of reactive oxygen species (ROS) in response to intestinal bacterial infection. During photoreceptor differentiation, it up-regulates transcription of Ubr3, which in turn promotes the hh-signaling pathway by mediating the ubiquitination and degradation of cos. This is Protein hedgehog from Drosophila virilis (Fruit fly).